Here is a 427-residue protein sequence, read N- to C-terminus: 3-phosphoshikimate 1-carboxyvinyltransferase (427 aa).

Lys-21, Ser-22, and Arg-26 together coordinate 3-phosphoshikimate. Lys-21 provides a ligand contact to phosphoenolpyruvate. Phosphoenolpyruvate contacts are provided by Gly-93 and Arg-121. 3-phosphoshikimate-binding residues include Ser-166, Gln-168, Asp-314, and Lys-341. Gln-168 is a binding site for phosphoenolpyruvate. The active-site Proton acceptor is the Asp-314. Residues Arg-345 and Arg-387 each contribute to the phosphoenolpyruvate site.

The protein belongs to the EPSP synthase family. In terms of assembly, monomer.

The protein localises to the cytoplasm. The catalysed reaction is 3-phosphoshikimate + phosphoenolpyruvate = 5-O-(1-carboxyvinyl)-3-phosphoshikimate + phosphate. It participates in metabolic intermediate biosynthesis; chorismate biosynthesis; chorismate from D-erythrose 4-phosphate and phosphoenolpyruvate: step 6/7. Catalyzes the transfer of the enolpyruvyl moiety of phosphoenolpyruvate (PEP) to the 5-hydroxyl of shikimate-3-phosphate (S3P) to produce enolpyruvyl shikimate-3-phosphate and inorganic phosphate. The chain is 3-phosphoshikimate 1-carboxyvinyltransferase from Alkaliphilus oremlandii (strain OhILAs) (Clostridium oremlandii (strain OhILAs)).